Here is a 360-residue protein sequence, read N- to C-terminus: Protein Wnt-5b (360 aa).

The first 16 residues, 1–16 (MTPILRLLLLSSLLSC), serve as a signal peptide directing secretion. A disulfide bond links Cys84 and Cys95. Asn94 and Asn100 each carry an N-linked (GlcNAc...) asparagine glycan. Intrachain disulfides connect Cys134–Cys142, Cys144–Cys162, Cys218–Cys232, Cys220–Cys227, Cys289–Cys320, Cys305–Cys315, Cys319–Cys359, Cys335–Cys350, Cys337–Cys347, and Cys342–Cys343. Ser224 carries the O-palmitoleoyl serine; by PORCN lipid modification. Asn292 and Asn306 each carry an N-linked (GlcNAc...) asparagine glycan.

This sequence belongs to the Wnt family. Post-translationally, palmitoleoylation is required for efficient binding to frizzled receptors. Depalmitoleoylation leads to Wnt signaling pathway inhibition.

It is found in the secreted. The protein localises to the extracellular space. Its subcellular location is the extracellular matrix. Ligand for members of the frizzled family of seven transmembrane receptors. Probable developmental protein. May be a signaling molecule which affects the development of discrete regions of tissues. Is likely to signal over only few cell diameters. In Xenopus laevis (African clawed frog), this protein is Protein Wnt-5b (wnt5b).